The sequence spans 92 residues: Signal recognition particle 19 kDa protein (92 aa).

This sequence belongs to the SRP19 family. Part of the signal recognition particle protein translocation system, which is composed of SRP and FtsY. Archaeal SRP consists of a 7S RNA molecule of 300 nucleotides and two protein subunits: SRP54 and SRP19.

The protein localises to the cytoplasm. Its function is as follows. Involved in targeting and insertion of nascent membrane proteins into the cytoplasmic membrane. Binds directly to 7S RNA and mediates binding of the 54 kDa subunit of the SRP. The sequence is that of Signal recognition particle 19 kDa protein from Haloarcula marismortui (strain ATCC 43049 / DSM 3752 / JCM 8966 / VKM B-1809) (Halobacterium marismortui).